The following is a 192-amino-acid chain: Transcription termination/antitermination protein NusG (192 aa).

A KOW domain is found at 140–168 (VGEIVTVTDGPFETFMGTVEEIDQEKNRL).

It belongs to the NusG family.

In terms of biological role, participates in transcription elongation, termination and antitermination. This Rickettsia conorii (strain ATCC VR-613 / Malish 7) protein is Transcription termination/antitermination protein NusG.